Here is a 146-residue protein sequence, read N- to C-terminus: Large ribosomal subunit protein uL15 (146 aa).

A compositionally biased stretch (basic and acidic residues) spans 1 to 13; the sequence is MKLNELKPNEGSR. The tract at residues 1–54 is disordered; sequence MKLNELKPNEGSRRNRKRVGRGTSSGYGKTAGRGQKGQLARTGGKTRLGFEGGQ. A compositionally biased stretch (gly residues) spans 23–35; it reads TSSGYGKTAGRGQ.

Belongs to the universal ribosomal protein uL15 family. Part of the 50S ribosomal subunit.

Binds to the 23S rRNA. This Lactobacillus gasseri (strain ATCC 33323 / DSM 20243 / BCRC 14619 / CIP 102991 / JCM 1131 / KCTC 3163 / NCIMB 11718 / NCTC 13722 / AM63) protein is Large ribosomal subunit protein uL15.